A 799-amino-acid polypeptide reads, in one-letter code: Ribonucleoside-diphosphate reductase large subunit (799 aa).

Residues T192, 207 to 208 (SC), G238, 408 to 412 (NLCAE), and 612 to 616 (PTAGT) contribute to the substrate site. A disulfide bridge connects residues C208 and C424. N408 acts as the Proton acceptor in catalysis. C410 functions as the Cysteine radical intermediate in the catalytic mechanism. The Proton acceptor role is filled by E412. A disordered region spans residues 765-799 (PDSGDGVGGYKGGDEEPRSPEHAQCESPDRCLSCQ). The segment covering 776-793 (GGDEEPRSPEHAQCESPD) has biased composition (basic and acidic residues).

The protein belongs to the ribonucleoside diphosphate reductase large chain family. Heterotetramer composed of a homodimer of the large subunit (R1) and a homodimer of the small subunit (R2). Larger multisubunit protein complex are also active, composed of (R1)n(R2)n.

It catalyses the reaction a 2'-deoxyribonucleoside 5'-diphosphate + [thioredoxin]-disulfide + H2O = a ribonucleoside 5'-diphosphate + [thioredoxin]-dithiol. In terms of biological role, ribonucleoside-diphosphate reductase holoenzyme provides the precursors necessary for viral DNA synthesis. Allows virus growth in non-dividing cells, as well as reactivation from latency in infected hosts. Catalyzes the biosynthesis of deoxyribonucleotides from the corresponding ribonucleotides. The sequence is that of Ribonucleoside-diphosphate reductase large subunit from Equine herpesvirus 2 (strain 86/87) (EHV-2).